The primary structure comprises 423 residues: uncharacterized protein (423 aa).

This is an uncharacterized protein from Ictaluridae (bullhead catfishes).